We begin with the raw amino-acid sequence, 77 residues long: Translational regulator CsrA (77 aa).

This sequence belongs to the CsrA/RsmA family. Homodimer; the beta-strands of each monomer intercalate to form a hydrophobic core, while the alpha-helices form wings that extend away from the core.

The protein resides in the cytoplasm. Functionally, a translational regulator that binds mRNA to regulate translation initiation and/or mRNA stability. Usually binds in the 5'-UTR at or near the Shine-Dalgarno sequence preventing ribosome-binding, thus repressing translation. Its main target seems to be the major flagellin gene, while its function is anatagonized by FliW. This chain is Translational regulator CsrA, found in Desulfitobacterium hafniense (strain Y51).